We begin with the raw amino-acid sequence, 349 residues long: DNA polymerase IV (349 aa).

Residues 4–185 (IIHIDCDCFY…LPVAKLHGVG (182 aa)) form the UmuC domain. Mg(2+)-binding residues include D8 and D103. Residue E104 is part of the active site.

The protein belongs to the DNA polymerase type-Y family. As to quaternary structure, monomer. Mg(2+) is required as a cofactor.

Its subcellular location is the cytoplasm. The enzyme catalyses DNA(n) + a 2'-deoxyribonucleoside 5'-triphosphate = DNA(n+1) + diphosphate. In terms of biological role, poorly processive, error-prone DNA polymerase involved in untargeted mutagenesis. Copies undamaged DNA at stalled replication forks, which arise in vivo from mismatched or misaligned primer ends. These misaligned primers can be extended by PolIV. Exhibits no 3'-5' exonuclease (proofreading) activity. May be involved in translesional synthesis, in conjunction with the beta clamp from PolIII. This Pseudomonas aeruginosa (strain UCBPP-PA14) protein is DNA polymerase IV.